Reading from the N-terminus, the 230-residue chain is Protein FAM3A (230 aa).

Residues 1–33 form the signal peptide; the sequence is MRLAGPLRIVALIIIMGLTWILVTILLGGPGVG. 2 disulfides stabilise this stretch: Cys59/Cys87 and Cys65/Cys222. Residues 68-226 form the GG-type lectin domain; that stretch reads EHLSFRIVSG…LEMEGCIPRR (159 aa).

The protein belongs to the FAM3 family.

The protein resides in the secreted. This chain is Protein FAM3A (Fam3a), found in Mus musculus (Mouse).